Here is a 386-residue protein sequence, read N- to C-terminus: Eukaryotic translation initiation factor 3 subunit M (386 aa).

The PCI domain maps to 181 to 343 (NSELASKVMI…RKVHISSTMH (163 aa)).

Belongs to the eIF-3 subunit M family. As to quaternary structure, component of the eukaryotic translation initiation factor 3 (eIF-3) complex.

Its subcellular location is the cytoplasm. Functionally, component of the eukaryotic translation initiation factor 3 (eIF-3) complex, which is involved in protein synthesis of a specialized repertoire of mRNAs and, together with other initiation factors, stimulates binding of mRNA and methionyl-tRNAi to the 40S ribosome. The eIF-3 complex specifically targets and initiates translation of a subset of mRNAs involved in cell proliferation. This Aedes aegypti (Yellowfever mosquito) protein is Eukaryotic translation initiation factor 3 subunit M.